The following is a 329-amino-acid chain: Quinate dehydrogenase (329 aa).

It catalyses the reaction L-quinate + NAD(+) = 3-dehydroquinate + NADH + H(+). The protein operates within aromatic compound metabolism; 3,4-dihydroxybenzoate biosynthesis; 3-dehydroquinate from D-quinate (NAD(+) route): step 1/1. This is Quinate dehydrogenase (qutB) from Emericella nidulans (strain FGSC A4 / ATCC 38163 / CBS 112.46 / NRRL 194 / M139) (Aspergillus nidulans).